The primary structure comprises 237 residues: Ribonuclease PH (237 aa).

Residues arginine 86 and 124-126 (GTR) contribute to the phosphate site.

The protein belongs to the RNase PH family. As to quaternary structure, homohexameric ring arranged as a trimer of dimers.

The enzyme catalyses tRNA(n+1) + phosphate = tRNA(n) + a ribonucleoside 5'-diphosphate. Functionally, phosphorolytic 3'-5' exoribonuclease that plays an important role in tRNA 3'-end maturation. Removes nucleotide residues following the 3'-CCA terminus of tRNAs; can also add nucleotides to the ends of RNA molecules by using nucleoside diphosphates as substrates, but this may not be physiologically important. Probably plays a role in initiation of 16S rRNA degradation (leading to ribosome degradation) during starvation. This is Ribonuclease PH from Roseobacter denitrificans (strain ATCC 33942 / OCh 114) (Erythrobacter sp. (strain OCh 114)).